Here is a 310-residue protein sequence, read N- to C-terminus: Aspartate carbamoyltransferase catalytic subunit (310 aa).

Residues arginine 58 and threonine 59 each contribute to the carbamoyl phosphate site. Lysine 87 is a binding site for L-aspartate. Residues arginine 108, histidine 136, and glutamine 139 each contribute to the carbamoyl phosphate site. Positions 169 and 229 each coordinate L-aspartate. The carbamoyl phosphate site is built by leucine 268 and proline 269.

It belongs to the aspartate/ornithine carbamoyltransferase superfamily. ATCase family. In terms of assembly, heterododecamer (2C3:3R2) of six catalytic PyrB chains organized as two trimers (C3), and six regulatory PyrI chains organized as three dimers (R2).

It catalyses the reaction carbamoyl phosphate + L-aspartate = N-carbamoyl-L-aspartate + phosphate + H(+). It functions in the pathway pyrimidine metabolism; UMP biosynthesis via de novo pathway; (S)-dihydroorotate from bicarbonate: step 2/3. In terms of biological role, catalyzes the condensation of carbamoyl phosphate and aspartate to form carbamoyl aspartate and inorganic phosphate, the committed step in the de novo pyrimidine nucleotide biosynthesis pathway. This chain is Aspartate carbamoyltransferase catalytic subunit, found in Leptospira biflexa serovar Patoc (strain Patoc 1 / Ames).